The primary structure comprises 255 residues: 5'-nucleotidase SurE (255 aa).

Residues Asp-8, Asp-9, Ser-40, and Asn-93 each coordinate a divalent metal cation.

It belongs to the SurE nucleotidase family. It depends on a divalent metal cation as a cofactor.

The protein localises to the cytoplasm. The catalysed reaction is a ribonucleoside 5'-phosphate + H2O = a ribonucleoside + phosphate. Functionally, nucleotidase that shows phosphatase activity on nucleoside 5'-monophosphates. This is 5'-nucleotidase SurE from Rhodopseudomonas palustris (strain BisB5).